Consider the following 129-residue polypeptide: Small ribosomal subunit protein uS11 (129 aa).

It belongs to the universal ribosomal protein uS11 family. As to quaternary structure, part of the 30S ribosomal subunit. Interacts with proteins S7 and S18. Binds to IF-3.

In terms of biological role, located on the platform of the 30S subunit, it bridges several disparate RNA helices of the 16S rRNA. Forms part of the Shine-Dalgarno cleft in the 70S ribosome. The polypeptide is Small ribosomal subunit protein uS11 (Phenylobacterium zucineum (strain HLK1)).